The primary structure comprises 485 residues: D-alanine--D-alanyl carrier protein ligase (485 aa).

ATP is bound at residue 144 to 145 (TS). Aspartate 189 contacts D-alanine. 284 to 289 (NTYGPT) contacts ATP. Valine 293 contacts D-alanine. ATP is bound by residues aspartate 365 and lysine 473. Position 473 (lysine 473) interacts with D-alanine.

Belongs to the ATP-dependent AMP-binding enzyme family. DltA subfamily.

It is found in the cytoplasm. It catalyses the reaction holo-[D-alanyl-carrier protein] + D-alanine + ATP = D-alanyl-[D-alanyl-carrier protein] + AMP + diphosphate. It functions in the pathway cell wall biogenesis; lipoteichoic acid biosynthesis. Functionally, catalyzes the first step in the D-alanylation of lipoteichoic acid (LTA), the activation of D-alanine and its transfer onto the D-alanyl carrier protein (Dcp) DltC. In an ATP-dependent two-step reaction, forms a high energy D-alanyl-AMP intermediate, followed by transfer of the D-alanyl residue as a thiol ester to the phosphopantheinyl prosthetic group of the Dcp. D-alanylation of LTA plays an important role in modulating the properties of the cell wall in Gram-positive bacteria, influencing the net charge of the cell wall. The sequence is that of D-alanine--D-alanyl carrier protein ligase from Staphylococcus aureus (strain MRSA252).